Consider the following 450-residue polypeptide: TNF receptor-associated factor family protein DDB_G0273433/DDB_G0273509 (450 aa).

The RING-type; degenerate zinc finger occupies 26–73 (CQICFNSVIDFKKETLSFDVLQCRNGHISCHECWNRQLSIKQECPSCK). 2 consecutive TRAF-type zinc fingers follow at residues 129-185 (HHLK…KKLN) and 186-243 (KHIE…SQLS). The stretch at 257–297 (QNVMDLHKLQLDECNQDYRKLEKQNRDLEKRLFYLESTVNS) forms a coiled coil. The 121-residue stretch at 319–439 (VYKGKWVINN…NNSLTISISI (121 aa)) folds into the MATH domain.

The protein belongs to the TNF receptor-associated factor family. A subfamily.

The protein localises to the cytoplasm. Probable adapter protein and signal transducer that links members of the tumor necrosis factor receptor family to different signaling pathways by association with the receptor cytoplasmic domain and kinases. This is TNF receptor-associated factor family protein DDB_G0273433/DDB_G0273509 from Dictyostelium discoideum (Social amoeba).